A 447-amino-acid chain; its full sequence is 23S rRNA (uracil(1939)-C(5))-methyltransferase RlmD (447 aa).

Residues 7–66 (RKPLSQEPQKASIEALTHEGRGIAHVAGKTVFIDGALPGETVWFHYLRRRGKFDEGRVLE) enclose the TRAM domain. The [4Fe-4S] cluster site is built by C79, C85, C88, and C168. S-adenosyl-L-methionine contacts are provided by Q275, F304, N309, E325, D352, and D374. C400 (nucleophile) is an active-site residue.

Belongs to the class I-like SAM-binding methyltransferase superfamily. RNA M5U methyltransferase family. RlmD subfamily.

The enzyme catalyses uridine(1939) in 23S rRNA + S-adenosyl-L-methionine = 5-methyluridine(1939) in 23S rRNA + S-adenosyl-L-homocysteine + H(+). Functionally, catalyzes the formation of 5-methyl-uridine at position 1939 (m5U1939) in 23S rRNA. The protein is 23S rRNA (uracil(1939)-C(5))-methyltransferase RlmD of Nitrosococcus oceani (strain ATCC 19707 / BCRC 17464 / JCM 30415 / NCIMB 11848 / C-107).